We begin with the raw amino-acid sequence, 312 residues long: Malate dehydrogenase (312 aa).

NAD(+) is bound by residues 12–17 (GAGFTG) and D36. Substrate is bound by residues R87 and R93. Residues N100 and 123-125 (LTN) contribute to the NAD(+) site. N125 provides a ligand contact to substrate. Residue S149 is modified to Phosphoserine. Substrate is bound at residue R156. Catalysis depends on H180, which acts as the Proton acceptor.

It belongs to the LDH/MDH superfamily. MDH type 3 family.

It catalyses the reaction (S)-malate + NAD(+) = oxaloacetate + NADH + H(+). Catalyzes the reversible oxidation of malate to oxaloacetate. In Bacillus cereus (strain ZK / E33L), this protein is Malate dehydrogenase.